We begin with the raw amino-acid sequence, 1025 residues long: MKFFALFIHRPVATTLLTLAIALAGILGFRLLPVAPLPQVDFPVIMVSASLPGASPETMASSVATPLERSLGRIAGVSEMTSTSSLGSTRIIMVFDFDRDINGAARDVQAAINAAQSLLPTGMPSRPTYRKANPSDAPIMIMTLTSDLYSPAQLYDYASTQLAQKLSQINGVGDVTVGGSSLPAVRVALNPQALFNQGVSLDAVRQTISNANQRRPQGAVEDGQQRWQLRTNDALQTASEYQPLVVHYNNGAAVRLSDVATVQDSVQDVRNAGMSRGKPAVLLVIRKTADANVIETVDRIRAELPELHEIIPAAINLEVAQDRSPTIRASLEEVEQSLMIAVALVILVVFVFLRSGRATLIPAVAVPVSLIGTFAAMYLCGFSLNNLSLMALTIATGFVVDDAIVVLENIARHVEAGMKPMAAALKGVREVGFTVLSMSLSLIAVFLPLLMTGGLIGRFFAEFSITLSVAILISLFVSVTLTPMMCAYLLKPHAPRSQPQRRGVGRLLLAVQRGYARSLTVVLNHARWVLLLLLGTVALTVWLFISIPKTFLPEQDTGRLSGFISADQSISFQAMRGKLEDFMKIVGADPDVSSVVGFTGGMRTNMGLMFISLKPLSERKDTAQAVIARLRAKLANEPGANLYLNAVQDIRVGGREANASYQYSLLSDDLAALRTWEPKIRQAFTALPELADVNSDQQDKGSEMALTYDRASMARLGINVSEANALLNDAFGQRQISTIYQPLNQYKVVMEVDPRYTQDISALNQMFVINSEGKPIPLAWFAKWQPANAPLSVNHEGLSAASTISFNLPEGVSLSQASEAIERTMTALGVPSSVRGSFAGTAQAFQQSQSSQLWLMLAAIAAVYIVLGILYESYVHPLTILSTLPSAGVGALLALALFDTPFSLIALIGILLLIGIVKKNAIMMVDFALEAERNGNLSPRDAIFQACLLRFRPILMTTLAALFGALPLVLTSGDGAELRQPLGITIAGGLIMSQLLTLYTTPVVYLMMDKLRRKKRTQTINATQH.

A run of 12 helical transmembrane segments spans residues 16–36 (LLTLAIALAGILGFRLLPVAP), 333–353 (EVEQSLMIAVALVILVVFVFL), 360–380 (LIPAVAVPVSLIGTFAAMYLC), 387–407 (LSLMALTIATGFVVDDAIVVL), 431–451 (VGFTVLSMSLSLIAVFLPLLM), 459–479 (FFAEFSITLSVAILISLFVSV), 528–548 (WVLLLLLGTVALTVWLFISIP), 853–873 (LWLMLAAIAAVYIVLGILYES), 875–895 (VHPLTILSTLPSAGVGALLAL), 897–917 (LFDTPFSLIALIGILLLIGIV), 953–973 (PILMTTLAALFGALPLVLTSG), and 984–1004 (ITIAGGLIMSQLLTLYTTPVV).

This sequence belongs to the resistance-nodulation-cell division (RND) (TC 2.A.6) family. MdtC subfamily. In terms of assembly, part of a tripartite efflux system composed of MdtA, MdtB and MdtC. MdtC forms a heteromultimer with MdtB.

Its subcellular location is the cell inner membrane. This Pantoea ananatis (strain AJ13355) protein is Multidrug resistance protein MdtC.